Reading from the N-terminus, the 261-residue chain is Imidazole glycerol phosphate synthase subunit HisF (261 aa).

Active-site residues include Asp16 and Asp135.

This sequence belongs to the HisA/HisF family. Heterodimer of HisH and HisF.

Its subcellular location is the cytoplasm. It carries out the reaction 5-[(5-phospho-1-deoxy-D-ribulos-1-ylimino)methylamino]-1-(5-phospho-beta-D-ribosyl)imidazole-4-carboxamide + L-glutamine = D-erythro-1-(imidazol-4-yl)glycerol 3-phosphate + 5-amino-1-(5-phospho-beta-D-ribosyl)imidazole-4-carboxamide + L-glutamate + H(+). Its pathway is amino-acid biosynthesis; L-histidine biosynthesis; L-histidine from 5-phospho-alpha-D-ribose 1-diphosphate: step 5/9. IGPS catalyzes the conversion of PRFAR and glutamine to IGP, AICAR and glutamate. The HisF subunit catalyzes the cyclization activity that produces IGP and AICAR from PRFAR using the ammonia provided by the HisH subunit. In Mycolicibacterium gilvum (strain PYR-GCK) (Mycobacterium gilvum (strain PYR-GCK)), this protein is Imidazole glycerol phosphate synthase subunit HisF.